Here is a 330-residue protein sequence, read N- to C-terminus: 2-methoxy-6-polyprenyl-1,4-benzoquinol methylase, mitochondrial (330 aa).

The transit peptide at 1–42 (MAAPRSWALWSFCGCGWSRAVSGCRLPGLRSSSPRGPLGARL) directs the protein to the mitochondrion. S-adenosyl-L-methionine is bound by residues Thr117, Asp171, and 199-200 (DA).

This sequence belongs to the class I-like SAM-binding methyltransferase superfamily. MenG/UbiE family. In terms of assembly, component of a multi-subunit COQ enzyme complex, composed of at least COQ3, COQ4, COQ5, COQ6, COQ7 and COQ9. Interacts with PYURF; the interaction is direct, stabilizes COQ5 protein and associates PYURF with COQ enzyme complex.

Its subcellular location is the mitochondrion inner membrane. The enzyme catalyses 2-methoxy-6-(all-trans-decaprenyl)benzene-1,4-diol + S-adenosyl-L-methionine = 5-methoxy-2-methyl-3-(all-trans-decaprenyl)benzene-1,4-diol + S-adenosyl-L-homocysteine + H(+). The protein operates within cofactor biosynthesis; ubiquinone biosynthesis. Functionally, methyltransferase required for the conversion of 2-decaprenyl-6-methoxy-1,4-benzoquinol (DDMQH2) to 2-decaprenyl-3-methyl-6-methoxy-1,4-benzoquinol (DMQH2). The sequence is that of 2-methoxy-6-polyprenyl-1,4-benzoquinol methylase, mitochondrial from Bos taurus (Bovine).